We begin with the raw amino-acid sequence, 197 residues long: Lymphotoxin-alpha (197 aa).

A signal peptide spans 1–26; sequence MTPPGRLYLPLLLGLLLAPPPPGAQG. The THD domain occupies 55–197; it reads PAAHLVGDPS…SSVFFGAFAL (143 aa). Asn-88 carries an N-linked (GlcNAc...) asparagine glycan. Cys-112 and Cys-148 are joined by a disulfide.

The protein belongs to the tumor necrosis factor family. In terms of assembly, homotrimer, and heterotrimer of either two LTB and one LTA subunits or (less prevalent) two LTA and one LTB subunits. Interacts with TNFRSF14.

It localises to the secreted. It is found in the membrane. In terms of biological role, cytokine that in its homotrimeric form binds to TNFRSF1A/TNFR1, TNFRSF1B/TNFBR and TNFRSF14/HVEM. In its heterotrimeric form with LTB binds to TNFRSF3/LTBR. Lymphotoxin is produced by lymphocytes and is cytotoxic for a wide range of tumor cells in vitro and in vivo. This is Lymphotoxin-alpha (LTA) from Oryctolagus cuniculus (Rabbit).